The primary structure comprises 1969 residues: Myosin-3 (1969 aa).

A Myosin N-terminal SH3-like domain is found at 33–82 (DSKKNCWIPDPEDGFVAAEIQSTTGDQVTVVTVKGNQITVKKDQCQEMNP). One can recognise a Myosin motor domain in the interval 86-791 (DKTEDMANLT…VLAKLEDLRD (706 aa)). Lys-130 is subject to N6,N6,N6-trimethyllysine. 179-186 (GESGAGKT) contributes to the ATP binding site. Actin-binding regions lie at residues 667–689 (LNNLMNMLYQTHPHFIRCIIPNE) and 770–784 (KIGETKIFFKAGVLA). Positions 794-823 (LSRIVTMFQSRIRSYLAKAEVRRRYEQQTG) constitute an IQ domain. A coiled-coil region spans residues 853–1941 (LKAGKEQEAM…KMRNKIRASA (1089 aa)). Disordered stretches follow at residues 943 to 967 (QERHEDLTRQKKKTEQELSDTKKHV), 993 to 1029 (DEMANQDESVAKLNKEKKHQEESNRKLNEDLQSEEDK), and 1134 to 1153 (ELESERNSRQKADRTRNELQ). Basic and acidic residues-rich tracts occupy residues 1001-1029 (SVAKLNKEKKHQEESNRKLNEDLQSEEDK) and 1137-1153 (SERNSRQKADRTRNELQ).

This sequence belongs to the TRAFAC class myosin-kinesin ATPase superfamily. Myosin family. In terms of assembly, muscle myosin is a hexameric protein that consists of 2 heavy chain subunits (MHC), 2 alkali light chain subunits (MLC) and 2 regulatory light chain subunits (MLC-2).

It localises to the cytoplasm. It is found in the myofibril. The protein resides in the sarcomere. Its subcellular location is the a band. In terms of biological role, essential for muscle contraction. Involved in ovulation likely by regulating the contraction of gonadal myoepithelial sheath cells. The chain is Myosin-3 from Caenorhabditis briggsae.